Here is a 438-residue protein sequence, read N- to C-terminus: V-type ATP synthase beta chain (438 aa).

It belongs to the ATPase alpha/beta chains family.

Produces ATP from ADP in the presence of a proton gradient across the membrane. The V-type beta chain is a regulatory subunit. The polypeptide is V-type ATP synthase beta chain (Chlamydia felis (strain Fe/C-56) (Chlamydophila felis)).